Here is a 372-residue protein sequence, read N- to C-terminus: N-methyl-L-tryptophan oxidase (372 aa).

4-34 (DLIIIGSGSVGAAAGYYATRAGLNVLMTDAH) lines the FAD pocket. Cysteine 308 is modified (S-8alpha-FAD cysteine).

This sequence belongs to the MSOX/MTOX family. MTOX subfamily. Monomer. The cofactor is FAD.

It catalyses the reaction N(alpha)-methyl-L-tryptophan + O2 + H2O = L-tryptophan + formaldehyde + H2O2. Catalyzes the oxidative demethylation of N-methyl-L-tryptophan. This Escherichia coli (strain SMS-3-5 / SECEC) protein is N-methyl-L-tryptophan oxidase.